The chain runs to 150 residues: FAD synthase (150 aa).

Residues 11–12, 16–19, Asp-96, and Tyr-124 each bind ATP; these read TF and HPGH.

This sequence belongs to the archaeal FAD synthase family. Homodimer. The cofactor is a divalent metal cation.

It catalyses the reaction FMN + ATP + H(+) = FAD + diphosphate. The protein operates within cofactor biosynthesis; FAD biosynthesis; FAD from FMN: step 1/1. Functionally, catalyzes the transfer of the AMP portion of ATP to flavin mononucleotide (FMN) to produce flavin adenine dinucleotide (FAD) coenzyme. The sequence is that of FAD synthase from Methanococcus maripaludis (strain C5 / ATCC BAA-1333).